The primary structure comprises 323 residues: Thymidine kinase (323 aa).

Position 11–18 (11–18 (GPHGLGKT)) interacts with ATP. The active-site Proton acceptor is the Glu36. Residues Tyr54 and Gln78 each contribute to the substrate site. Arg169 contacts ATP. Position 175 (Arg175) interacts with substrate.

It belongs to the herpesviridae thymidine kinase family. As to quaternary structure, homodimer.

The enzyme catalyses thymidine + ATP = dTMP + ADP + H(+). Its function is as follows. Catalyzes the transfer of the gamma-phospho group of ATP to thymidine to generate dTMP in the salvage pathway of pyrimidine synthesis. The dTMP serves as a substrate for DNA polymerase during viral DNA replication. Allows the virus to be reactivated and to grow in non-proliferative cells lacking a high concentration of phosphorylated nucleic acid precursors. The sequence is that of Thymidine kinase from Bos taurus (Bovine).